The chain runs to 139 residues: ATP synthase epsilon chain (139 aa).

It belongs to the ATPase epsilon chain family. F-type ATPases have 2 components, CF(1) - the catalytic core - and CF(0) - the membrane proton channel. CF(1) has five subunits: alpha(3), beta(3), gamma(1), delta(1), epsilon(1). CF(0) has three main subunits: a, b and c.

The protein resides in the cell membrane. Produces ATP from ADP in the presence of a proton gradient across the membrane. The chain is ATP synthase epsilon chain from Pediococcus pentosaceus (strain ATCC 25745 / CCUG 21536 / LMG 10740 / 183-1w).